A 320-amino-acid chain; its full sequence is Acetyl-coenzyme A carboxylase carboxyl transferase subunit alpha (320 aa).

In terms of domain architecture, CoA carboxyltransferase C-terminal spans 41–295; it reads RIEEKAGQAL…GDAIAQAFDE (255 aa).

Belongs to the AccA family. Acetyl-CoA carboxylase is a heterohexamer composed of biotin carboxyl carrier protein (AccB), biotin carboxylase (AccC) and two subunits each of ACCase subunit alpha (AccA) and ACCase subunit beta (AccD).

The protein localises to the cytoplasm. The catalysed reaction is N(6)-carboxybiotinyl-L-lysyl-[protein] + acetyl-CoA = N(6)-biotinyl-L-lysyl-[protein] + malonyl-CoA. Its pathway is lipid metabolism; malonyl-CoA biosynthesis; malonyl-CoA from acetyl-CoA: step 1/1. Its function is as follows. Component of the acetyl coenzyme A carboxylase (ACC) complex. First, biotin carboxylase catalyzes the carboxylation of biotin on its carrier protein (BCCP) and then the CO(2) group is transferred by the carboxyltransferase to acetyl-CoA to form malonyl-CoA. The chain is Acetyl-coenzyme A carboxylase carboxyl transferase subunit alpha from Bradyrhizobium sp. (strain ORS 278).